We begin with the raw amino-acid sequence, 807 residues long: Anaphase-promoting complex subunit 4 (807 aa).

The residue at position 469 (Tyr-469) is a Phosphotyrosine. Residues 755–788 form a disordered region; that stretch reads DESSDDEEEAGGKPVKIKEEVLSESETEAHQDAA. A phosphoserine mark is found at Ser-757 and Ser-758. The span at 770-785 shows a compositional bias: basic and acidic residues; the sequence is KIKEEVLSESETEAHQ. A Glycyl lysine isopeptide (Lys-Gly) (interchain with G-Cter in SUMO2) cross-link involves residue Lys-772. 2 positions are modified to phosphoserine: Ser-777 and Ser-779. Residue Lys-797 forms a Glycyl lysine isopeptide (Lys-Gly) (interchain with G-Cter in SUMO2) linkage.

It belongs to the APC4 family. The mammalian APC/C is composed at least of 14 distinct subunits ANAPC1, ANAPC2, CDC27/APC3, ANAPC4, ANAPC5, CDC16/APC6, ANAPC7, CDC23/APC8, ANAPC10, ANAPC11, CDC26/APC12, ANAPC13, ANAPC15 and ANAPC16 that assemble into a complex of at least 19 chains with a combined molecular mass of around 1.2 MDa; APC/C interacts with FZR1 and FBXO5. In the context of the APC/C complex, directly interacts with UBE2S. Interacts with FBXO43.

The protein resides in the nucleus. The protein operates within protein modification; protein ubiquitination. In terms of biological role, component of the anaphase promoting complex/cyclosome (APC/C), a cell cycle-regulated E3 ubiquitin ligase that controls progression through mitosis and the G1 phase of the cell cycle. The APC/C complex acts by mediating ubiquitination and subsequent degradation of target proteins: it mainly mediates the formation of 'Lys-11'-linked polyubiquitin chains and, to a lower extent, the formation of 'Lys-48'- and 'Lys-63'-linked polyubiquitin chains. The APC/C complex catalyzes assembly of branched 'Lys-11'-/'Lys-48'-linked branched ubiquitin chains on target proteins. The polypeptide is Anaphase-promoting complex subunit 4 (Anapc4) (Mus musculus (Mouse)).